A 55-amino-acid chain; its full sequence is Small integral membrane protein 11 (55 aa).

The helical transmembrane segment at 9–29 (VPLLLYILAAKTLILCLAFAG) threads the bilayer. The stretch at 34-54 (QRRSLEGKLQAEKRKQSEKKA) forms a coiled coil.

Expressed in brain, heart, kidney, thymus, liver, stomach, muscle, lung, testis, ovary, skin and eye.

It localises to the membrane. The protein is Small integral membrane protein 11 of Mus musculus (Mouse).